A 465-amino-acid chain; its full sequence is Light-independent protochlorophyllide reductase subunit N (465 aa).

[4Fe-4S] cluster-binding residues include Cys22, Cys47, and Cys107.

Belongs to the BchN/ChlN family. As to quaternary structure, protochlorophyllide reductase is composed of three subunits; ChlL, ChlN and ChlB. Forms a heterotetramer of two ChlB and two ChlN subunits. The cofactor is [4Fe-4S] cluster.

The protein resides in the plastid. The protein localises to the chloroplast. The enzyme catalyses chlorophyllide a + oxidized 2[4Fe-4S]-[ferredoxin] + 2 ADP + 2 phosphate = protochlorophyllide a + reduced 2[4Fe-4S]-[ferredoxin] + 2 ATP + 2 H2O. It functions in the pathway porphyrin-containing compound metabolism; chlorophyll biosynthesis (light-independent). In terms of biological role, component of the dark-operative protochlorophyllide reductase (DPOR) that uses Mg-ATP and reduced ferredoxin to reduce ring D of protochlorophyllide (Pchlide) to form chlorophyllide a (Chlide). This reaction is light-independent. The NB-protein (ChlN-ChlB) is the catalytic component of the complex. The sequence is that of Light-independent protochlorophyllide reductase subunit N from Marchantia polymorpha (Common liverwort).